The sequence spans 351 residues: 3-dehydroquinate synthase (351 aa).

NAD(+) is bound by residues 126-127, Lys138, and Lys147; that span reads TT. The Zn(2+) site is built by Glu180, His244, and His260.

Belongs to the sugar phosphate cyclases superfamily. Dehydroquinate synthase family. Co(2+) is required as a cofactor. Zn(2+) serves as cofactor. The cofactor is NAD(+).

Its subcellular location is the cytoplasm. The catalysed reaction is 7-phospho-2-dehydro-3-deoxy-D-arabino-heptonate = 3-dehydroquinate + phosphate. It participates in metabolic intermediate biosynthesis; chorismate biosynthesis; chorismate from D-erythrose 4-phosphate and phosphoenolpyruvate: step 2/7. Catalyzes the conversion of 3-deoxy-D-arabino-heptulosonate 7-phosphate (DAHP) to dehydroquinate (DHQ). The protein is 3-dehydroquinate synthase of Exiguobacterium sp. (strain ATCC BAA-1283 / AT1b).